Here is a 430-residue protein sequence, read N- to C-terminus: Protein translocase subunit SecY (430 aa).

Transmembrane regions (helical) follow at residues 18 to 38 (IFFT…PAPG), 68 to 88 (FSIF…MQLL), 117 to 137 (FAII…NNYL), 148 to 168 (MSYL…LWLG), 179 to 199 (GISI…LIQF), 215 to 235 (LQVA…VYVL), 270 to 290 (VIPV…TMFF), 308 to 328 (NIGM…YAFV), 368 to 388 (FVGS…TKFM), and 390 to 410 (LPQS…VAIE).

Belongs to the SecY/SEC61-alpha family. As to quaternary structure, component of the Sec protein translocase complex. Heterotrimer consisting of SecY, SecE and SecG subunits. The heterotrimers can form oligomers, although 1 heterotrimer is thought to be able to translocate proteins. Interacts with the ribosome. Interacts with SecDF, and other proteins may be involved. Interacts with SecA.

The protein resides in the cell membrane. The central subunit of the protein translocation channel SecYEG. Consists of two halves formed by TMs 1-5 and 6-10. These two domains form a lateral gate at the front which open onto the bilayer between TMs 2 and 7, and are clamped together by SecE at the back. The channel is closed by both a pore ring composed of hydrophobic SecY resides and a short helix (helix 2A) on the extracellular side of the membrane which forms a plug. The plug probably moves laterally to allow the channel to open. The ring and the pore may move independently. The polypeptide is Protein translocase subunit SecY (Staphylococcus carnosus (strain TM300)).